Here is an 88-residue protein sequence, read N- to C-terminus: Sec-independent protein translocase protein TatA (88 aa).

The helical transmembrane segment at 1–21 threads the bilayer; that stretch reads MGGIGIWQLAIITVIVILLFG. Residues 46-88 form a disordered region; it reads DNDKDSTQVDDKDSTQVDDNAKQPSNKKVEENIKEQSKEKDRA.

Belongs to the TatA/E family. The Tat system comprises two distinct complexes: a TatABC complex, containing multiple copies of TatA, TatB and TatC subunits, and a separate TatA complex, containing only TatA subunits. Substrates initially bind to the TatABC complex, which probably triggers association of the separate TatA complex to form the active translocon.

It localises to the cell inner membrane. Part of the twin-arginine translocation (Tat) system that transports large folded proteins containing a characteristic twin-arginine motif in their signal peptide across membranes. TatA could form the protein-conducting channel of the Tat system. The sequence is that of Sec-independent protein translocase protein TatA from Psychromonas ingrahamii (strain DSM 17664 / CCUG 51855 / 37).